We begin with the raw amino-acid sequence, 297 residues long: MNLGSLVSETRNPDTLDLDALPTLEMLRRFNEEDKRVAYAVSETLPEVAKAVDAAAAALTRGGRLIYMGAGTSGRLGVLDASECPPTFGVPHGVVVGLIAGGPGALLKAVEGAEDNAQLGEDDLKAIGLNARDMVVGLAASGRTPYVIGGLKYARALGCATAAISCNPGSPIAEAAEIAISPVVGPEALTGSTRLKSGTAQKFVLNMISTGAMVKCGKVYQNLMVDMKATNVKLVDRACRMVMEATGVTREEAEAVLTQTEYEVKPAILMVLTGLDAQAAHARLAAHNGFLRAALQP.

An SIS domain is found at 55–218 (AAAALTRGGR…STGAMVKCGK (164 aa)). Catalysis depends on glutamate 83, which acts as the Proton donor. Glutamate 114 is an active-site residue.

It belongs to the GCKR-like family. MurNAc-6-P etherase subfamily. Homodimer.

It carries out the reaction N-acetyl-D-muramate 6-phosphate + H2O = N-acetyl-D-glucosamine 6-phosphate + (R)-lactate. It functions in the pathway amino-sugar metabolism; 1,6-anhydro-N-acetylmuramate degradation. Its pathway is amino-sugar metabolism; N-acetylmuramate degradation. It participates in cell wall biogenesis; peptidoglycan recycling. In terms of biological role, specifically catalyzes the cleavage of the D-lactyl ether substituent of MurNAc 6-phosphate, producing GlcNAc 6-phosphate and D-lactate. Together with AnmK, is also required for the utilization of anhydro-N-acetylmuramic acid (anhMurNAc) either imported from the medium or derived from its own cell wall murein, and thus plays a role in cell wall recycling. This chain is N-acetylmuramic acid 6-phosphate etherase, found in Cronobacter sakazakii (strain ATCC BAA-894) (Enterobacter sakazakii).